A 274-amino-acid chain; its full sequence is Diaminopimelate epimerase (274 aa).

Substrate is bound by residues N11, Q44, and N64. The active-site Proton donor is the C73. Residues 74-75, N157, N190, and 208-209 contribute to the substrate site; these read GN and ER. The active-site Proton acceptor is C217. 218 to 219 serves as a coordination point for substrate; that stretch reads GS.

This sequence belongs to the diaminopimelate epimerase family. In terms of assembly, homodimer.

The protein resides in the cytoplasm. The enzyme catalyses (2S,6S)-2,6-diaminopimelate = meso-2,6-diaminopimelate. It participates in amino-acid biosynthesis; L-lysine biosynthesis via DAP pathway; DL-2,6-diaminopimelate from LL-2,6-diaminopimelate: step 1/1. Its function is as follows. Catalyzes the stereoinversion of LL-2,6-diaminopimelate (L,L-DAP) to meso-diaminopimelate (meso-DAP), a precursor of L-lysine and an essential component of the bacterial peptidoglycan. The polypeptide is Diaminopimelate epimerase (Haemophilus influenzae (strain PittEE)).